A 216-amino-acid polypeptide reads, in one-letter code: Translation initiation factor 6 (216 aa).

This sequence belongs to the eIF-6 family.

Its function is as follows. Binds to the 50S ribosomal subunit and prevents its association with the 30S ribosomal subunit to form the 70S initiation complex. The polypeptide is Translation initiation factor 6 (Thermoplasma acidophilum (strain ATCC 25905 / DSM 1728 / JCM 9062 / NBRC 15155 / AMRC-C165)).